A 482-amino-acid polypeptide reads, in one-letter code: Replication factor C large subunit (482 aa).

ATP is bound at residue 46 to 53 (GPPGSGKT). Residues 420-482 (EKETPKKKKK…KKQATLDSFF (63 aa)) are disordered. Basic and acidic residues predominate over residues 442 to 476 (KISEPPKEPLKEVIEETVEKTDKKEKEKKDPKKQA).

Belongs to the activator 1 small subunits family. RfcL subfamily. In terms of assembly, heteromultimer composed of small subunits (RfcS) and large subunits (RfcL).

Part of the RFC clamp loader complex which loads the PCNA sliding clamp onto DNA. The polypeptide is Replication factor C large subunit (Methanococcus maripaludis (strain C7 / ATCC BAA-1331)).